Consider the following 501-residue polypeptide: Orsellinic acid/F9775 biosynthesis cluster protein D (501 aa).

The disordered stretch occupies residues 137–189; it reads EVTPTTEDEDDEENESENDEEEGDVDLEEQEDDNGGRQSTTVTTSPGPSAPSV. The segment covering 142–169 has biased composition (acidic residues); the sequence is TEDEDDEENESENDEEEGDVDLEEQEDD. Over residues 172–183 the composition is skewed to polar residues; that stretch reads GRQSTTVTTSPG.

Part of the gene cluster that mediates the biosynthesis of orsellinic acid, as well as of the cathepsin K inhibitors F9775 A and F9775 B. The non-reducing polyketide synthase orsA produces orsellinic acid by condensing acetyl-CoA with 3 malonyl-CoA units. Further modifications by the decarboxylase orsB and the tyrosinase-like protein orsC lead to the production of F9775 A and F9775 B. The functions of orsD and orsE remain unclear since only orsB and orsC are required to convert orsellinic acid into F9775 A and F9775 B. The polypeptide is Orsellinic acid/F9775 biosynthesis cluster protein D (Emericella nidulans (strain FGSC A4 / ATCC 38163 / CBS 112.46 / NRRL 194 / M139) (Aspergillus nidulans)).